The sequence spans 280 residues: Vacuolar protein sorting-associated protein 71 (280 aa).

The span at 64–73 (RSEGDGNSIS) shows a compositional bias: polar residues. The segment at 64–92 (RSEGDGNSISRQDDRNSKNSHSFEERYTQ) is disordered. The segment covering 74–92 (RQDDRNSKNSHSFEERYTQ) has biased composition (basic and acidic residues). The Zn(2+) site is built by cysteine 244, cysteine 247, cysteine 256, cysteine 259, cysteine 264, cysteine 268, histidine 272, and cysteine 277. The HIT-type zinc-finger motif lies at 244-277 (CSICGGYDSISSCVNCGNKICSVSCFKLHNETRC).

As to quaternary structure, belongs to the SWR1 complex at least composed of ACT1, ARP4, RVB1, RVB2, ARP6, YAF9, VPS71, VPS72, SWC3, SWC4, SWC5, SWR1 and HTZ1.

It is found in the nucleus. Its function is as follows. Participates in the catalytic exchange of histone H2A for the H2A variant HZT1, an euchromatin-specific factor, leading to chromatin remodeling and changes in transcription of targeted genes. Indirectly involved in vacuolar protein sorting. This is Vacuolar protein sorting-associated protein 71 (VPS71) from Saccharomyces cerevisiae (strain ATCC 204508 / S288c) (Baker's yeast).